The sequence spans 177 residues: RNA pyrophosphohydrolase (177 aa).

The Nudix hydrolase domain maps to 6–149; that stretch reads GYRPNVGIVI…KRDVYRRVMK (144 aa). The Nudix box signature appears at 38–59; the sequence is GGINPGESPEQAMYRELFEEVG.

It belongs to the Nudix hydrolase family. RppH subfamily. Requires a divalent metal cation as cofactor.

Its function is as follows. Accelerates the degradation of transcripts by removing pyrophosphate from the 5'-end of triphosphorylated RNA, leading to a more labile monophosphorylated state that can stimulate subsequent ribonuclease cleavage. The polypeptide is RNA pyrophosphohydrolase (Pectobacterium atrosepticum (strain SCRI 1043 / ATCC BAA-672) (Erwinia carotovora subsp. atroseptica)).